Here is a 657-residue protein sequence, read N- to C-terminus: Probable cobalt/nickel-exporting P-type ATPase (657 aa).

5 helical membrane passes run 40-60 (WATVALLLFLAGLVAQLNGAP), 62-82 (AMWWTLYLACYLAGGWGSAWA), 101-121 (AAVGAVAIGQIFDGALLIVIF), 268-288 (LGMVAATLALIVIPLMFGADL), and 299-319 (MIVASPCAVVLATMPPLLSAI). Catalysis depends on aspartate 347, which acts as the 4-aspartylphosphate intermediate. Mg(2+) is bound by residues aspartate 543 and aspartate 547. The chain crosses the membrane as a helical span at residues 596–618 (VVTVNLAIAATFIAVLVLWDLFG).

Belongs to the cation transport ATPase (P-type) (TC 3.A.3) family. Type IB subfamily.

The protein resides in the cell membrane. Its function is as follows. Involved in heavy metal homeostasis. Probably exports nickel and cobalt ions out of the cell. This is Probable cobalt/nickel-exporting P-type ATPase (ctpD) from Mycobacterium bovis (strain ATCC BAA-935 / AF2122/97).